The following is a 140-amino-acid chain: Large ribosomal subunit protein bL17 (140 aa).

It belongs to the bacterial ribosomal protein bL17 family. Part of the 50S ribosomal subunit. Contacts protein L32.

The polypeptide is Large ribosomal subunit protein bL17 (Paracoccus denitrificans (strain Pd 1222)).